We begin with the raw amino-acid sequence, 352 residues long: Putative pectinesterase 11 (352 aa).

A helical transmembrane segment spans residues 13–35 (ANYHHIIIINIFILSSITSSSMA). N76 carries an N-linked (GlcNAc...) asparagine glycan. The active-site Proton donor is the D175. Catalysis depends on D196, which acts as the Nucleophile. Residue N218 is glycosylated (N-linked (GlcNAc...) asparagine). Positions 252 and 254 each coordinate substrate. Residues 332-352 (LRPAPSHFKNAPKQTQNKEIN) are disordered. The segment covering 343-352 (PKQTQNKEIN) has biased composition (polar residues).

The protein belongs to the pectinesterase family.

The protein localises to the membrane. It carries out the reaction [(1-&gt;4)-alpha-D-galacturonosyl methyl ester](n) + n H2O = [(1-&gt;4)-alpha-D-galacturonosyl](n) + n methanol + n H(+). The protein operates within glycan metabolism; pectin degradation; 2-dehydro-3-deoxy-D-gluconate from pectin: step 1/5. Its function is as follows. Acts in the modification of cell walls via demethylesterification of cell wall pectin. This Arabidopsis thaliana (Mouse-ear cress) protein is Putative pectinesterase 11 (PME11).